We begin with the raw amino-acid sequence, 254 residues long: 5-oxoprolinase subunit A (254 aa).

Belongs to the LamB/PxpA family. As to quaternary structure, forms a complex composed of PxpA, PxpB and PxpC.

The catalysed reaction is 5-oxo-L-proline + ATP + 2 H2O = L-glutamate + ADP + phosphate + H(+). In terms of biological role, catalyzes the cleavage of 5-oxoproline to form L-glutamate coupled to the hydrolysis of ATP to ADP and inorganic phosphate. This Heliobacterium modesticaldum (strain ATCC 51547 / Ice1) protein is 5-oxoprolinase subunit A.